The primary structure comprises 235 residues: tRNA (guanine-N(1)-)-methyltransferase (235 aa).

S-adenosyl-L-methionine is bound by residues glycine 114 and 134 to 139; that span reads IGDYIL.

Belongs to the RNA methyltransferase TrmD family. As to quaternary structure, homodimer.

It is found in the cytoplasm. The enzyme catalyses guanosine(37) in tRNA + S-adenosyl-L-methionine = N(1)-methylguanosine(37) in tRNA + S-adenosyl-L-homocysteine + H(+). Functionally, specifically methylates guanosine-37 in various tRNAs. This is tRNA (guanine-N(1)-)-methyltransferase from Ehrlichia ruminantium (strain Welgevonden).